A 351-amino-acid chain; its full sequence is Protein Tex24 (351 aa).

Disordered stretches follow at residues 69-101, 117-144, and 275-298; these read PSTA…PSLS, PEDR…AQGK, and EKVK…PKSM. Basic residues predominate over residues 73–83; it reads HGKRKPGHLPR. Basic and acidic residues predominate over residues 275–285; it reads EKVKPSSHDMH.

Specific to testis, where it is expressed in spermatogonia.

The protein resides in the nucleus. In terms of biological role, nuclear factor which might have a role in spermatogenesis. This chain is Protein Tex24, found in Mus musculus (Mouse).